A 348-amino-acid chain; its full sequence is MKENGDSVSGQDELCDLTIIGGGPTGIFAAFQCGMNNISCRIIESMPELGGQLTALYPEKHIYDVAAFPEVQASELVESLWGQAKRYDPEVVLDEQVRQYKKLDDGSFEVETLSGRTFASRALLVAAGLGAFSPRKLPQLGDISELEGHTVLYSVQNMKELEGKKVLIVGGGDSALDWAMMLLPHAEHITVAHRSPDFRAHGKTKDDLFAAAEKGLVDVHLNTEVIAIDHDGPALRHAYLRSKSGKETSLEAEYMLVLIGFKSDLGPLAEWGLELCENAMVVDSQMKTEVDGLYAAGDIAYYPGKLKIIQTGLSDATMAVRHCLNYIHPGEKIKQQFSSIKMAKEKNK.

8 residues coordinate FAD: Thr25, Glu44, Gln52, Tyr57, Val97, Phe132, Asp298, and Ser339.

It belongs to the ferredoxin--NADP reductase type 2 family. In terms of assembly, homodimer. It depends on FAD as a cofactor.

It catalyses the reaction 2 reduced [2Fe-2S]-[ferredoxin] + NADP(+) + H(+) = 2 oxidized [2Fe-2S]-[ferredoxin] + NADPH. The sequence is that of Ferredoxin--NADP reductase from Chlorobium phaeobacteroides (strain BS1).